Reading from the N-terminus, the 430-residue chain is Histidine--tRNA ligase (430 aa).

Belongs to the class-II aminoacyl-tRNA synthetase family. As to quaternary structure, homodimer.

The protein resides in the cytoplasm. It catalyses the reaction tRNA(His) + L-histidine + ATP = L-histidyl-tRNA(His) + AMP + diphosphate + H(+). This chain is Histidine--tRNA ligase, found in Synechococcus sp. (strain CC9902).